An 886-amino-acid polypeptide reads, in one-letter code: Semaphorin-6B (886 aa).

A signal peptide spans 1 to 26 (MWTPRVPPPRPALSFFLLLLLGVTYG). The Extracellular segment spans residues 27-605 (LFPEEPPPLS…VSVNLLVTSS (579 aa)). The Sema domain occupies 32–525 (PPPLSVAPRD…FPRCVVRVPV (494 aa)). The N-linked (GlcNAc...) asparagine glycan is linked to N75. Intrachain disulfides connect C117–C127 and C145–C154. N-linked (GlcNAc...) asparagine glycosylation is found at N156 and N292. Disulfide bonds link C268/C379 and C293/C338. N387, N442, and N463 each carry an N-linked (GlcNAc...) asparagine glycan. Cystine bridges form between C487-C519, C528-C546, C534-C580, and C538-C554. Residues 606–626 (VAAFVVGAVVSGFSVGWFVGL) form a helical membrane-spanning segment. Topologically, residues 627–886 (RERRELARRK…TGERTAPPVP (260 aa)) are cytoplasmic. Disordered stretches follow at residues 655–677 (RLGERRGTGPGGRGGAGGGPGGP), 697–731 (HGGPHDLDTGLLPTPEQTPLPQKRLPTPHPHAHAL), and 761–886 (EQPQ…PPVP). The segment covering 662–674 (TGPGGRGGAGGGP) has biased composition (gly residues). R667 bears the Omega-N-methylarginine mark. The segment covering 707–718 (LLPTPEQTPLPQ) has biased composition (low complexity).

This sequence belongs to the semaphorin family. In terms of assembly, homodimer. Binds specifically the SH3 domain of the protooncogene C-SRC. In adulthood, it is expressed ubiquitously.

It is found in the cell membrane. Functions as a cell surface repellent for mossy fibers of developing neurons in the hippocampus where it plays a role in axon guidance. May function through the PLXNA4 receptor expressed by mossy cell axons. The protein is Semaphorin-6B (Sema6b) of Mus musculus (Mouse).